We begin with the raw amino-acid sequence, 86 residues long: Small ribosomal subunit protein bS20 (86 aa).

A disordered region spans residues methionine 1 to lysine 25. Residues arginine 12–lysine 25 show a composition bias toward basic and acidic residues.

The protein belongs to the bacterial ribosomal protein bS20 family.

Its function is as follows. Binds directly to 16S ribosomal RNA. The chain is Small ribosomal subunit protein bS20 from Beutenbergia cavernae (strain ATCC BAA-8 / DSM 12333 / CCUG 43141 / JCM 11478 / NBRC 16432 / NCIMB 13614 / HKI 0122).